A 379-amino-acid chain; its full sequence is Cytochrome b (379 aa).

Helical transmembrane passes span 34-54 (FGSL…LLAM), 78-99 (WLIR…YLHI), 114-134 (WNTG…GYVL), and 179-199 (FFAL…IHLT). Residues histidine 84 and histidine 98 each contribute to the heme b site. Heme b is bound by residues histidine 183 and histidine 197. An a ubiquinone-binding site is contributed by histidine 202. 4 consecutive transmembrane segments (helical) span residues 227-247 (LKDI…AFFS), 289-309 (LGGV…PFLH), 321-341 (LSQV…WIGS), and 348-368 (FIII…ILFP).

It belongs to the cytochrome b family. The cytochrome bc1 complex contains 11 subunits: 3 respiratory subunits (MT-CYB, CYC1 and UQCRFS1), 2 core proteins (UQCRC1 and UQCRC2) and 6 low-molecular weight proteins (UQCRH/QCR6, UQCRB/QCR7, UQCRQ/QCR8, UQCR10/QCR9, UQCR11/QCR10 and a cleavage product of UQCRFS1). This cytochrome bc1 complex then forms a dimer. The cofactor is heme b.

It is found in the mitochondrion inner membrane. Functionally, component of the ubiquinol-cytochrome c reductase complex (complex III or cytochrome b-c1 complex) that is part of the mitochondrial respiratory chain. The b-c1 complex mediates electron transfer from ubiquinol to cytochrome c. Contributes to the generation of a proton gradient across the mitochondrial membrane that is then used for ATP synthesis. The polypeptide is Cytochrome b (MT-CYB) (Casuarius bennetti (Dwarf cassowary)).